A 423-amino-acid chain; its full sequence is Probable peptidoglycan glycosyltransferase FtsW (423 aa).

Over 1–53 the chain is Cytoplasmic; it reads MNLKEKLFPENRLGLNRFWNFSRGGIDNFRTGLRDAVSGVEQTRSRMMEYDQL. The helical transmembrane segment at 54 to 74 threads the bilayer; that stretch reads LVWAILSLMLIGLVMVYSASI. The Periplasmic segment spans residues 75 to 88; that stretch reads TLADGPKYANYSSN. Residues 89 to 109 traverse the membrane as a helical segment; it reads FFLIRHMISLAIAIGVGIWAF. The Cytoplasmic segment spans residues 110–119; sequence KIPTKVWDRY. Residues 120–140 traverse the membrane as a helical segment; sequence SPVIFGITVLLLIAVLIPGVG. Over 141–149 the chain is Periplasmic; the sequence is RGVNGAKRW. The helical transmembrane segment at 150 to 170 threads the bilayer; sequence IPLGLMNFQSSELMKFAAVIF. At 171 to 184 the chain is on the cytoplasmic side; sequence AASYTVQRQEYLHS. Residues 185-205 traverse the membrane as a helical segment; that stretch reads FVKGMLPMGIAVALVGGLLMA. Residues 206 to 208 lie on the Periplasmic side of the membrane; that stretch reads EPD. A helical transmembrane segment spans residues 209 to 229; sequence MGAFVVVALIAFGILFLGGIN. At 230 to 231 the chain is on the cytoplasmic side; sequence AK. The chain crosses the membrane as a helical span at residues 232-252; it reads LFGGLIAVGLMSGATMIAFSP. The Periplasmic portion of the chain corresponds to 253–310; it reads LRRGRMLAFMDPWQVDNAANKGYQLTHSLMAFGRGEWFGTGLGGSVEKLHYLPEAHTD. The helical transmembrane segment at 311 to 331 threads the bilayer; that stretch reads FIMAVIGEELGFVGVVVMIFL. The Cytoplasmic segment spans residues 332–359; that stretch reads FYWIVRRAFLIGRTALQLDRSFAGLAAK. A helical transmembrane segment spans residues 360-380; the sequence is GVAIWIGWQAFINMGVNLGLL. Topologically, residues 381-386 are periplasmic; that stretch reads PTKGLT. The chain crosses the membrane as a helical span at residues 387–407; that stretch reads LPLVSYGGSGILMNAVAMAML. Residues 408-423 are Cytoplasmic-facing; it reads LRIDFENRILMRGGKL.

This sequence belongs to the SEDS family. FtsW subfamily.

The protein resides in the cell inner membrane. It carries out the reaction [GlcNAc-(1-&gt;4)-Mur2Ac(oyl-L-Ala-gamma-D-Glu-L-Lys-D-Ala-D-Ala)](n)-di-trans,octa-cis-undecaprenyl diphosphate + beta-D-GlcNAc-(1-&gt;4)-Mur2Ac(oyl-L-Ala-gamma-D-Glu-L-Lys-D-Ala-D-Ala)-di-trans,octa-cis-undecaprenyl diphosphate = [GlcNAc-(1-&gt;4)-Mur2Ac(oyl-L-Ala-gamma-D-Glu-L-Lys-D-Ala-D-Ala)](n+1)-di-trans,octa-cis-undecaprenyl diphosphate + di-trans,octa-cis-undecaprenyl diphosphate + H(+). The protein operates within cell wall biogenesis; peptidoglycan biosynthesis. In terms of biological role, peptidoglycan polymerase that is essential for cell division. In Polynucleobacter necessarius subsp. necessarius (strain STIR1), this protein is Probable peptidoglycan glycosyltransferase FtsW.